A 201-amino-acid polypeptide reads, in one-letter code: Large ribosomal subunit protein uL4 (201 aa).

Residues 43-71 (TRAQKTRSEVSGGGKKPWAQKGTGRARAG) are disordered.

This sequence belongs to the universal ribosomal protein uL4 family. As to quaternary structure, part of the 50S ribosomal subunit.

Its function is as follows. One of the primary rRNA binding proteins, this protein initially binds near the 5'-end of the 23S rRNA. It is important during the early stages of 50S assembly. It makes multiple contacts with different domains of the 23S rRNA in the assembled 50S subunit and ribosome. Forms part of the polypeptide exit tunnel. This is Large ribosomal subunit protein uL4 from Pseudoalteromonas translucida (strain TAC 125).